We begin with the raw amino-acid sequence, 349 residues long: Spermidine/putrescine import ATP-binding protein PotA (349 aa).

The ABC transporter domain maps to 7 to 237 (IELKGITKSY…PANSFVAKFI (231 aa)). 39-46 (GPSGCGKT) contacts ATP.

The protein belongs to the ABC transporter superfamily. Spermidine/putrescine importer (TC 3.A.1.11.1) family. The complex is composed of two ATP-binding proteins (PotA), two transmembrane proteins (PotB and PotC) and a solute-binding protein (PotD).

It is found in the cell membrane. It catalyses the reaction ATP + H2O + polyamine-[polyamine-binding protein]Side 1 = ADP + phosphate + polyamineSide 2 + [polyamine-binding protein]Side 1.. In terms of biological role, part of the ABC transporter complex PotABCD involved in spermidine/putrescine import. Responsible for energy coupling to the transport system. This chain is Spermidine/putrescine import ATP-binding protein PotA, found in Clostridium perfringens (strain SM101 / Type A).